Reading from the N-terminus, the 503-residue chain is Aspartyl/glutamyl-tRNA(Asn/Gln) amidotransferase subunit B (503 aa).

Belongs to the GatB/GatE family. GatB subfamily. In terms of assembly, heterotrimer of A, B and C subunits.

It catalyses the reaction L-glutamyl-tRNA(Gln) + L-glutamine + ATP + H2O = L-glutaminyl-tRNA(Gln) + L-glutamate + ADP + phosphate + H(+). It carries out the reaction L-aspartyl-tRNA(Asn) + L-glutamine + ATP + H2O = L-asparaginyl-tRNA(Asn) + L-glutamate + ADP + phosphate + 2 H(+). Its function is as follows. Allows the formation of correctly charged Asn-tRNA(Asn) or Gln-tRNA(Gln) through the transamidation of misacylated Asp-tRNA(Asn) or Glu-tRNA(Gln) in organisms which lack either or both of asparaginyl-tRNA or glutaminyl-tRNA synthetases. The reaction takes place in the presence of glutamine and ATP through an activated phospho-Asp-tRNA(Asn) or phospho-Glu-tRNA(Gln). The polypeptide is Aspartyl/glutamyl-tRNA(Asn/Gln) amidotransferase subunit B (Cereibacter sphaeroides (strain ATCC 17023 / DSM 158 / JCM 6121 / CCUG 31486 / LMG 2827 / NBRC 12203 / NCIMB 8253 / ATH 2.4.1.) (Rhodobacter sphaeroides)).